The sequence spans 529 residues: MVAAMTMCAAVAVLLVLTSTMAAAAGDGDGDGGGFDYKKALHSGLLYFEAQRSGHLPYNQRVRWRGHSGLADGLQQGVDLVGGYYDAGDNVKFGLPMAFTMTMLSWAAAEFWDEIAAAGERRHVLEAIKWGTDYLVKAHTAADELWAEVGDGDTDHYCWQRPEDMTTSRQAYKVDRDNPGSDVAGETAAALAAASIVFRRSKPRYSRLLLRHAEQLFDFGDRYRGKYDSSIGEVRAYYASVSGYGDELLWAALWLHRATGRRGYLDYAVAMADELGGVGWAVTEFSWDVKYAGLQILAAKVLMDGGDHPAAHAATLEQYRSKAEHYLCACLGKNAAAGDNVNRTAGGMLFVRRWNNMQYVTNAAFLLTVYSRYLRDSGGDTIRCSGGAMATGDELAAMARAQADYVLGDNPAGVSYMVGYGRRFPRRVHHRGASMVSHRADGRFVGCVQGYDRWFRRGGANPNVVAGAIVGGPDDRDRFRDSRDNYMQTEACTYNTAPMVGVFAHLHAQKMAARTANNNADRSMIKRVD.

A signal peptide spans 1–24 (MVAAMTMCAAVAVLLVLTSTMAAA). Catalysis depends on D89, which acts as the Nucleophile. N-linked (GlcNAc...) asparagine glycosylation occurs at N342. Active-site residues include H429, D481, and E490.

This sequence belongs to the glycosyl hydrolase 9 (cellulase E) family. As to expression, expressed in roots and flowers.

The protein localises to the secreted. It catalyses the reaction Endohydrolysis of (1-&gt;4)-beta-D-glucosidic linkages in cellulose, lichenin and cereal beta-D-glucans.. The protein is Endoglucanase 21 (GLU9) of Oryza sativa subsp. japonica (Rice).